The primary structure comprises 321 residues: Phospho-N-acetylmuramoyl-pentapeptide-transferase (321 aa).

9 helical membrane passes run 1-21, 53-73, 77-97, 110-130, 145-165, 174-194, 200-220, 226-248, and 301-321; these read MSLL…FALM, TMGG…VGGW, LQPT…LGFW, GLKA…LTLV, LGVW…LVGF, GLDG…AVIA, YNVM…FVYN, IFMG…ILLH, and IDIV…ATII.

It belongs to the glycosyltransferase 4 family. MraY subfamily. It depends on Mg(2+) as a cofactor.

It is found in the cell membrane. The catalysed reaction is UDP-N-acetyl-alpha-D-muramoyl-L-alanyl-gamma-D-glutamyl-L-lysyl-D-alanyl-D-alanine + di-trans,octa-cis-undecaprenyl phosphate = Mur2Ac(oyl-L-Ala-gamma-D-Glu-L-Lys-D-Ala-D-Ala)-di-trans,octa-cis-undecaprenyl diphosphate + UMP. It participates in cell wall biogenesis; peptidoglycan biosynthesis. Catalyzes the initial step of the lipid cycle reactions in the biosynthesis of the cell wall peptidoglycan: transfers peptidoglycan precursor phospho-MurNAc-pentapeptide from UDP-MurNAc-pentapeptide onto the lipid carrier undecaprenyl phosphate, yielding undecaprenyl-pyrophosphoryl-MurNAc-pentapeptide, known as lipid I. In Lactiplantibacillus plantarum (strain ATCC BAA-793 / NCIMB 8826 / WCFS1) (Lactobacillus plantarum), this protein is Phospho-N-acetylmuramoyl-pentapeptide-transferase.